The primary structure comprises 520 residues: BBSome complex member BBS4 (520 aa).

Residues 1–26 are disordered; the sequence is MAEVKLGMKTQVPASVESQKPRSKKA. The required for localization to centrosomes stretch occupies residues 1 to 66; it reads MAEVKLGMKT…EQLQETQGLC (66 aa). TPR repeat units lie at residues 67-100, 102-134, 135-167, 168-201, 203-235, 237-269, 270-303, 304-337, 339-371, and 373-408; these read EYAI…SPQC, DNLK…NQKD, WEIC…LNKH, DLTY…SPEN, ELLT…DPAN, KAIL…IPES, PPLW…APFD, WKIL…QPKM, ELYM…DKCN, and LVNL…LKDN. Positions 101–337 are interaction with PCM1; sequence ADNLKQVARS…SAAINFQPKM (237 aa). Residues 338-520 are required for localization to centrosomes; sequence GELYMLLAVA…TEASEQKKEK (183 aa). The interval 488–520 is disordered; that stretch reads AQLPKPPSLPLEPEPEPTVEASPTEASEQKKEK.

It belongs to the BBS4 family. In terms of assembly, part of BBSome complex, that contains BBS1, BBS2, BBS4, BBS5, BBS7, BBS8/TTC8, BBS9 and BBIP10. Interacts with PCM1 and DCTN1. Interacts with DC28B. Interacts with ALDOB and C2CD3. Interacts with PKD1. Interacts with CEP290. Interacts with DLEC1. As to expression, expressed in the hippocampus and dentate gyrus, the columnar epithelial cells of bronchioles, the olfactory epithelium and the inner segment and outer nuclear layer of the retina. Expressed in testis.

The protein resides in the cytoplasm. Its subcellular location is the cytoskeleton. It localises to the microtubule organizing center. It is found in the centrosome. The protein localises to the cell projection. The protein resides in the cilium membrane. Its subcellular location is the centriolar satellite. It localises to the cilium. It is found in the flagellum. In terms of biological role, the BBSome complex is thought to function as a coat complex required for sorting of specific membrane proteins to the primary cilia. The BBSome complex is required for ciliogenesis but is dispensable for centriolar satellite function. This ciliogenic function is mediated in part by the Rab8 GDP/GTP exchange factor, which localizes to the basal body and contacts the BBSome. Rab8(GTP) enters the primary cilium and promotes extension of the ciliary membrane. Firstly the BBSome associates with the ciliary membrane and binds to RAB3IP/Rabin8, the guanosyl exchange factor (GEF) for Rab8 and then the Rab8-GTP localizes to the cilium and promotes docking and fusion of carrier vesicles to the base of the ciliary membrane. The BBSome complex, together with the LTZL1, controls SMO ciliary trafficking and contributes to the sonic hedgehog (SHH) pathway regulation. Required for proper BBSome complex assembly and its ciliary localization. Required for microtubule anchoring at the centrosome but not for microtubule nucleation. May be required for the dynein-mediated transport of pericentriolar proteins to the centrosome. The chain is BBSome complex member BBS4 (Bbs4) from Mus musculus (Mouse).